A 140-amino-acid polypeptide reads, in one-letter code: MASYGDDGVELTELTLGPPGASARRARRGRKNGHPPPSSSMIQAAYFVKVSMDGTPYLRKVDVAAYGDYLELVEALNDMFYCSTIGLMDGYGEWEHAVVYEDGDGDWMLVGDVPWEMFVSSCKRMRVMRACEARGLSSNA.

The tract at residues 1–40 (MASYGDDGVELTELTLGPPGASARRARRGRKNGHPPPSSS) is disordered. Residues 14–18 (LTLGP) carry the EAR-like (transcriptional repression) motif. Positions 24–33 (RRARRGRKNG) are enriched in basic residues. One can recognise a PB1 domain in the interval 45–130 (AYFVKVSMDG…SCKRMRVMRA (86 aa)).

Belongs to the Aux/IAA family. As to quaternary structure, homodimers and heterodimers. In terms of tissue distribution, expressed in roots, seedlings and flowers.

Its subcellular location is the nucleus. Aux/IAA proteins are short-lived transcriptional factors that function as repressors of early auxin response genes at low auxin concentrations. The polypeptide is Auxin-responsive protein IAA26 (IAA26) (Oryza sativa subsp. japonica (Rice)).